The following is a 522-amino-acid chain: Peptide chain release factor 3 (522 aa).

The 268-residue stretch at 10 to 277 (ASRKTFAIIS…TFVDFAPSPS (268 aa)) folds into the tr-type G domain. GTP-binding positions include 19 to 26 (SHPDAGKT), 87 to 91 (DTPGH), and 141 to 144 (NKMD).

Belongs to the TRAFAC class translation factor GTPase superfamily. Classic translation factor GTPase family. PrfC subfamily.

The protein localises to the cytoplasm. Functionally, increases the formation of ribosomal termination complexes and stimulates activities of RF-1 and RF-2. It binds guanine nucleotides and has strong preference for UGA stop codons. It may interact directly with the ribosome. The stimulation of RF-1 and RF-2 is significantly reduced by GTP and GDP, but not by GMP. The chain is Peptide chain release factor 3 from Listeria monocytogenes serotype 4b (strain CLIP80459).